The primary structure comprises 134 residues: Small ribosomal subunit protein uS11 (134 aa).

The segment at 115–134 (VTPIPTDSTRRKGGRRGRRL) is disordered. Residues 125-134 (RKGGRRGRRL) show a composition bias toward basic residues.

Belongs to the universal ribosomal protein uS11 family.

The polypeptide is Small ribosomal subunit protein uS11 (RPS14) (Syntrichia ruralis (Great hairy screw-moss)).